We begin with the raw amino-acid sequence, 1217 residues long: CST complex subunit CTC1 (1217 aa).

Residues 328-347 (EADPKPLPMPSNSEDKKDPE) form a disordered region.

Belongs to the CTC1 family. Component of the CST complex, composed of TEN1/C17orf106, CTC1/C17orf68 and STN1; in the complex interacts directly with STN1. Interacts with ACD and POT1.

It localises to the nucleus. Its subcellular location is the chromosome. The protein localises to the telomere. Component of the CST complex proposed to act as a specialized replication factor promoting DNA replication under conditions of replication stress or natural replication barriers such as the telomere duplex. The CST complex binds single-stranded DNA with high affinity in a sequence-independent manner, while isolated subunits bind DNA with low affinity by themselves. Initially the CST complex has been proposed to protect telomeres from DNA degradation. However, the CST complex has been shown to be involved in several aspects of telomere replication. The CST complex inhibits telomerase and is involved in telomere length homeostasis; it is proposed to bind to newly telomerase-synthesized 3' overhangs and to terminate telomerase action implicating the association with the ACD:POT1 complex thus interfering with its telomerase stimulation activity. The CST complex is also proposed to be involved in fill-in synthesis of the telomeric C-strand probably implicating recruitment and activation of DNA polymerase alpha. The CST complex facilitates recovery from many forms of exogenous DNA damage; seems to be involved in the re-initiation of DNA replication at repaired forks and/or dormant origins. Involved in telomere maintenance. Involved in genome stability. May be in involved in telomeric C-strand fill-in during late S/G2 phase. The sequence is that of CST complex subunit CTC1 (CTC1) from Homo sapiens (Human).